A 581-amino-acid chain; its full sequence is Arginine--tRNA ligase (581 aa).

Residues 126–136 carry the 'HIGH' region motif; that stretch reads PNLAKEMHVGH.

This sequence belongs to the class-I aminoacyl-tRNA synthetase family. Monomer.

Its subcellular location is the cytoplasm. It carries out the reaction tRNA(Arg) + L-arginine + ATP = L-arginyl-tRNA(Arg) + AMP + diphosphate. The polypeptide is Arginine--tRNA ligase (Shewanella piezotolerans (strain WP3 / JCM 13877)).